The sequence spans 318 residues: MMLVLRFANLYVEPMAIFLIFLNAFIWSSSFALSKSAMDAASPLFVTGSRMVLAGIVLFGLLLFKRESFRLPRQAVMPIVLLSVIGFYLTNVLEFIGLQGLSSSKACFIYGFSPFTAAFCSYVQLREVVTWKKLGGLSLGLVSYLVYLLFGGGEDVSEWGWQLGMPELLLIVATCLSSYGWTLLRKLERQCESLSITAINAYAMVIAGILSLAHSAITEVWNPLPVENPVLFLQSIGALVIFSNLICYNLFAKLLRSFSSTFLSFCNLVMPLFASFFGWLLLGESFPPGLLFAVGFMVLGCRLIYHEEFRQGYVLSSE.

The next 10 helical transmembrane spans lie at 7–27 (FANLYVEPMAIFLIFLNAFIW), 44–64 (LFVTGSRMVLAGIVLFGLLLF), 76–96 (VMPIVLLSVIGFYLTNVLEFI), 105–125 (KACFIYGFSPFTAAFCSYVQL), 134–154 (LGGLSLGLVSYLVYLLFGGGE), 163–183 (LGMPELLLIVATCLSSYGWTL), 193–213 (SLSITAINAYAMVIAGILSLA), 231–251 (LFLQSIGALVIFSNLICYNLF), 262–282 (FLSFCNLVMPLFASFFGWLLL), and 285–305 (SFPPGLLFAVGFMVLGCRLIY). An EamA 1 domain is found at 25 to 148 (FIWSSSFALS…LGLVSYLVYL (124 aa)). The EamA 2 domain occupies 191–304 (CESLSITAIN…GFMVLGCRLI (114 aa)).

The protein belongs to the drug/metabolite transporter (DMT) superfamily. 10 TMS drug/metabolite exporter (DME) (TC 2.A.7.3) family.

Its subcellular location is the cell membrane. In terms of biological role, transports S-adenosylmethionine (SAM) and S-adenosylhomocysteine (SAH). Allows bacteria to acquire SAM from the eukaryotic host cell and to likely remove the toxic by-product SAH. This chain is S-adenosylmethionine/S-adenosylhomocysteine transporter, found in Chlamydia muridarum (strain MoPn / Nigg).